We begin with the raw amino-acid sequence, 488 residues long: Poly(3-hydroxybutyrate) depolymerase (488 aa).

Residues 1-27 form the signal peptide; sequence MVRRLWRRIAGWLAACVAILCAFPLHA. S166 serves as the catalytic Charge relay system. A Fibronectin type-III domain is found at 346–428; it reads APTGLAVTAT…AAVSATTKSA (83 aa).

The protein belongs to the AB hydrolase superfamily. Lipase family.

It localises to the secreted. The enzyme catalyses [(3R)-hydroxybutanoate](n) + H2O = [(3R)-hydroxybutanoate](n-2) + (3R)-hydroxybutanoate dimer + H(+). It catalyses the reaction [(3R)-hydroxybutanoate](n) + H2O = [(3R)-hydroxybutanoate](n-3) + (3R)-hydroxybutanoate trimer + H(+). The catalysed reaction is [(3R)-hydroxybutanoate](n) + H2O = [(3R)-hydroxybutanoate](n-1) + (R)-3-hydroxybutanoate + H(+). It carries out the reaction [(3R)-hydroxybutanoate](n) + H2O = [(3R)-hydroxybutanoate](n-5) + (3R)-hydroxybutanoate pentamer + H(+). The enzyme catalyses [(3R)-hydroxybutanoate](n) + H2O = [(3R)-hydroxybutanoate](n-4) + (3R)-hydroxybutanoate tetramer + H(+). Its function is as follows. This protein degrades water-insoluble and water-soluble PHB to monomeric D(-)-3-hydroxybutyrate. This chain is Poly(3-hydroxybutyrate) depolymerase, found in Ralstonia pickettii (Burkholderia pickettii).